Here is a 582-residue protein sequence, read N- to C-terminus: 2-isopropylmalate synthase (582 aa).

Residues 40 to 314 (PRWCAVDLRD…DPMIDFSDID (275 aa)) form the Pyruvate carboxyltransferase domain. 4 residues coordinate Mg(2+): aspartate 49, histidine 253, histidine 255, and asparagine 289. The interval 456–582 (SPAGHPGGQW…NRAIRDNQVD (127 aa)) is regulatory domain.

The protein belongs to the alpha-IPM synthase/homocitrate synthase family. LeuA type 2 subfamily. Homodimer. Mg(2+) is required as a cofactor.

The protein localises to the cytoplasm. The catalysed reaction is 3-methyl-2-oxobutanoate + acetyl-CoA + H2O = (2S)-2-isopropylmalate + CoA + H(+). The protein operates within amino-acid biosynthesis; L-leucine biosynthesis; L-leucine from 3-methyl-2-oxobutanoate: step 1/4. Catalyzes the condensation of the acetyl group of acetyl-CoA with 3-methyl-2-oxobutanoate (2-ketoisovalerate) to form 3-carboxy-3-hydroxy-4-methylpentanoate (2-isopropylmalate). This Renibacterium salmoninarum (strain ATCC 33209 / DSM 20767 / JCM 11484 / NBRC 15589 / NCIMB 2235) protein is 2-isopropylmalate synthase.